The primary structure comprises 282 residues: tRNA pseudouridine synthase B (282 aa).

Asp36 (nucleophile) is an active-site residue.

This sequence belongs to the pseudouridine synthase TruB family. Type 1 subfamily.

It catalyses the reaction uridine(55) in tRNA = pseudouridine(55) in tRNA. Its function is as follows. Responsible for synthesis of pseudouridine from uracil-55 in the psi GC loop of transfer RNAs. The sequence is that of tRNA pseudouridine synthase B from Mycoplasmopsis pulmonis (strain UAB CTIP) (Mycoplasma pulmonis).